Consider the following 1058-residue polypeptide: Gem-associated protein 4 (1058 aa).

At Met1 the chain carries N-acetylmethionine. At Thr84 the chain carries Phosphothreonine. A phosphoserine mark is found at Ser86 and Ser205. The segment at 714 to 735 (LPKEKRCLSLDRKDLAIHILEL) is leucine-zipper.

Part of the core SMN complex that contains SMN1, GEMIN2/SIP1, DDX20/GEMIN3, GEMIN4, GEMIN5, GEMIN6, GEMIN7, GEMIN8 and STRAP/UNRIP. Part of the SMN-Sm complex that contains SMN1, GEMIN2/SIP1, DDX20/GEMIN3, GEMIN4, GEMIN5, GEMIN6, GEMIN7, GEMIN8, STRAP/UNRIP and the Sm proteins SNRPB, SNRPD1, SNRPD2, SNRPD3, SNRPE, SNRPF and SNRPG. Interacts with GEMIN3; the interaction is direct. Interacts with GEMIN5. Interacts with GEMIN8; the interaction is direct. Interacts with several snRNP SM core proteins, including SNRPB, SNRPD1, SNRPD2, SNRPD3 and SNRPE. Interacts with PPP4R2.

The protein localises to the cytoplasm. The protein resides in the nucleus. It is found in the nucleolus. It localises to the gem. In terms of biological role, the SMN complex catalyzes the assembly of small nuclear ribonucleoproteins (snRNPs), the building blocks of the spliceosome, and thereby plays an important role in the splicing of cellular pre-mRNAs. Most spliceosomal snRNPs contain a common set of Sm proteins SNRPB, SNRPD1, SNRPD2, SNRPD3, SNRPE, SNRPF and SNRPG that assemble in a heptameric protein ring on the Sm site of the small nuclear RNA to form the core snRNP (Sm core). In the cytosol, the Sm proteins SNRPD1, SNRPD2, SNRPE, SNRPF and SNRPG are trapped in an inactive 6S pICln-Sm complex by the chaperone CLNS1A that controls the assembly of the core snRNP. To assemble core snRNPs, the SMN complex accepts the trapped 5Sm proteins from CLNS1A forming an intermediate. Binding of snRNA inside 5Sm triggers eviction of the SMN complex, thereby allowing binding of SNRPD3 and SNRPB to complete assembly of the core snRNP. The chain is Gem-associated protein 4 (GEMIN4) from Homo sapiens (Human).